Here is a 348-residue protein sequence, read N- to C-terminus: Rhodopsin (348 aa).

Methionine 1 is modified (N-acetylmethionine). At 1-36 (MNGTEGPNFYVPFSNATGVVRSPFEYPQYYLAEPWQ) the chain is on the extracellular side. N-linked (GlcNAc...) asparagine glycans are attached at residues asparagine 2 and asparagine 15. The chain crosses the membrane as a helical span at residues 37 to 61 (FSMLAAYMFLLIVLGFPINFLTLYV). The Cytoplasmic portion of the chain corresponds to 62-73 (TVQHKKLRTPLN). A helical membrane pass occupies residues 74–96 (YILLNLAVADLFMVFGGFTTTLY). The Extracellular segment spans residues 97-110 (TSLHGYFVFGPTGC). A disulfide bridge connects residues cysteine 110 and cysteine 187. A helical membrane pass occupies residues 111–133 (NAEGFFATLGGEIALWSLVVLAI). The 'Ionic lock' involved in activated form stabilization signature appears at 134–136 (ERY). Topologically, residues 134–152 (ERYVVVCKPMSNFRFGENH) are cytoplasmic. Residues 153-173 (AIMGVAFTWVMALACAAPPLF) form a helical membrane-spanning segment. The Extracellular portion of the chain corresponds to 174–202 (GWSRYIPEGLQCSCGIDYYTLKPEVNNES). Glutamate 201 serves as a coordination point for Zn(2+). The helical transmembrane segment at 203 to 224 (FVIYMFVVHFTIPMIVIFFCYG) threads the bilayer. The Cytoplasmic portion of the chain corresponds to 225 to 252 (QLVFTVKEARAQQQESATTQKAEKEVTR). The chain crosses the membrane as a helical span at residues 253-274 (MVIIMVIAFLICWVPYASVAFY). Residues 275 to 286 (IFTHQGSNFGPI) are Extracellular-facing. Position 279 (glutamine 279) interacts with Zn(2+). The chain crosses the membrane as a helical span at residues 287 to 308 (FMTIPAFFAKSASIYNPVIYIM). The residue at position 296 (lysine 296) is an N6-(retinylidene)lysine. Residues 309–348 (MNKQFRNCMLTTICCGKNPLGDDEASATVSKTETSQVAPA) are Cytoplasmic-facing. 2 S-palmitoyl cysteine lipidation sites follow: cysteine 322 and cysteine 323. An interaction with SAG region spans residues 330 to 348 (DDEASATVSKTETSQVAPA). Phosphoserine is present on serine 334. The residue at position 336 (threonine 336) is a Phosphothreonine. Serine 338 bears the Phosphoserine mark. Residues threonine 340 and threonine 342 each carry the phosphothreonine modification. A Phosphoserine modification is found at serine 343.

This sequence belongs to the G-protein coupled receptor 1 family. Opsin subfamily. Homodimer. May form a complex composed of RHO, GRK1 and RCVRN in a Ca(2+)-dependent manner; RCVRN prevents the interaction between GRK1 and RHO. Interacts with GRK1. Interacts (phosphorylated form) with SAG. Interacts with GNAT1. Interacts with GNAT3. SAG and G-proteins compete for a common binding site. Interacts with PRCD; the interaction promotes PRCD stability. Forms a complex with ASAP1 and ARF4. Forms a complex with ASAP1, RAB11A, Rabin8/RAB3IP, ARF4 and RAB11FIP3; the complex regulates Golgi-to-cilia rhodopsin/RHO transport in photoreceptors. Post-translationally, phosphorylated on some or all of the serine and threonine residues present in the C-terminal region. In terms of processing, contains one covalently linked retinal chromophore. Upon light absorption, the covalently bound 11-cis-retinal is converted to all-trans-retinal. After hydrolysis of the Schiff base and release of the covalently bound all-trans-retinal, active rhodopsin is regenerated by binding of a fresh molecule of 11-cis-retinal.

It localises to the membrane. The protein resides in the cell projection. It is found in the cilium. The protein localises to the photoreceptor outer segment. In terms of biological role, photoreceptor required for image-forming vision at low light intensity. Required for photoreceptor cell viability after birth. Light-induced isomerization of 11-cis to all-trans retinal triggers a conformational change that activates signaling via G-proteins. Subsequent receptor phosphorylation mediates displacement of the bound G-protein alpha subunit by the arrestin SAG and terminates signaling. The chain is Rhodopsin (RHO) from Macaca fascicularis (Crab-eating macaque).